We begin with the raw amino-acid sequence, 196 residues long: ATP-dependent Clp protease proteolytic subunit (196 aa).

The Nucleophile role is filled by S101. Residue H126 is part of the active site.

Belongs to the peptidase S14 family. Component of the chloroplastic Clp protease core complex.

Its subcellular location is the plastid. It is found in the chloroplast stroma. The catalysed reaction is Hydrolysis of proteins to small peptides in the presence of ATP and magnesium. alpha-casein is the usual test substrate. In the absence of ATP, only oligopeptides shorter than five residues are hydrolyzed (such as succinyl-Leu-Tyr-|-NHMec, and Leu-Tyr-Leu-|-Tyr-Trp, in which cleavage of the -Tyr-|-Leu- and -Tyr-|-Trp bonds also occurs).. In terms of biological role, cleaves peptides in various proteins in a process that requires ATP hydrolysis. Has a chymotrypsin-like activity. Plays a major role in the degradation of misfolded proteins. The chain is ATP-dependent Clp protease proteolytic subunit from Arabis hirsuta (Hairy rock-cress).